A 323-amino-acid chain; its full sequence is Germacrene A synthase (323 aa).

Residues Asp82, Asp86, Asn222, Ser226, and Glu230 each coordinate Mg(2+). A DDXXD motif motif is present at residues 82–86 (DDQCD).

Belongs to the terpene synthase family. Mg(2+) is required as a cofactor.

It carries out the reaction (2E,6E)-farnesyl diphosphate = 5-epi-alpha-selinene + diphosphate. Catalyzes the cyclization of farnesyl diphosphate (FPP) to the sesquiterpene germacrene A. The polypeptide is Germacrene A synthase (Nostoc punctiforme (strain ATCC 29133 / PCC 73102)).